The following is a 238-amino-acid chain: Small ribosomal subunit protein uS3 (238 aa).

Residues 39–107 (MREFIHDYAK…ELHLNIVEIR (69 aa)) enclose the KH type-2 domain. The span at 212 to 222 (PQAHDRRHSEA) shows a compositional bias: basic and acidic residues. The segment at 212 to 238 (PQAHDRRHSEAQEGAAPRPPRRDRERA) is disordered.

Belongs to the universal ribosomal protein uS3 family. Part of the 30S ribosomal subunit. Forms a tight complex with proteins S10 and S14.

In terms of biological role, binds the lower part of the 30S subunit head. Binds mRNA in the 70S ribosome, positioning it for translation. The polypeptide is Small ribosomal subunit protein uS3 (Cereibacter sphaeroides (strain ATCC 17029 / ATH 2.4.9) (Rhodobacter sphaeroides)).